We begin with the raw amino-acid sequence, 798 residues long: Heterogeneous nuclear ribonucleoprotein U (798 aa).

Position 2 is an N-acetylserine (Ser-2). Position 4 is a phosphoserine (Ser-4). The region spanning 8–42 (VKKLKVSELKEELKKRRLSDKGLKADLMDRLQAAL) is the SAP domain. N6-acetyllysine occurs at positions 17 and 21. The tract at residues 41–229 (ALDNEAGGRP…VKRPREDHGR (189 aa)) is disordered. Ser-58 is modified (phosphoserine). 2 stretches are compositionally biased toward low complexity: residues 71–80 (AGLEQEAAAG) and 103–113 (ENGAAGAADAG). 2 stretches are compositionally biased toward acidic residues: residues 114-128 (AMEEEEAASEDENGD) and 134-147 (EGEDELGDEEEGAG). Over residues 153 to 169 (GEQQSQPPAAAQQASQQ) the composition is skewed to low complexity. N6-acetyllysine is present on Lys-179. Position 180 is an ADP-ribosylserine (Ser-180). The span at 192 to 203 (APPGARQGQQQA) shows a compositional bias: low complexity. The segment covering 207–229 (GKTEQKAGDKKRGVKRPREDHGR) has biased composition (basic and acidic residues). At Arg-229 the chain carries Citrulline. Lys-239 bears the N6-acetyllysine; alternate mark. A Glycyl lysine isopeptide (Lys-Gly) (interchain with G-Cter in SUMO1); alternate cross-link involves residue Lys-239. Lys-239 participates in a covalent cross-link: Glycyl lysine isopeptide (Lys-Gly) (interchain with G-Cter in SUMO2); alternate. A Phosphotyrosine modification is found at Tyr-240. Phosphoserine is present on residues Ser-241 and Ser-245. The 197-residue stretch at 242 to 438 (RAKSPQPPVE…VEFNFGQKEK (197 aa)) folds into the B30.2/SPRY domain. Thr-260 is modified (phosphothreonine). Lys-326 carries the post-translational modification N6-acetyllysine. The ATPase domain stretch occupies residues 462-646 (PKGPEEKKDC…QKLLEQYKEE (185 aa)). Lys-469 participates in a covalent cross-link: Glycyl lysine isopeptide (Lys-Gly) (interchain with G-Cter in SUMO2). Residue 478–485 (GLPGAGKT) coordinates ATP. 2 positions are modified to N6-acetyllysine; alternate: Lys-490 and Lys-498. Residues Lys-490 and Lys-498 each participate in a glycyl lysine isopeptide (Lys-Gly) (interchain with G-Cter in SUMO2); alternate cross-link. Thr-506 carries the phosphothreonine modification. Residue Lys-510 forms a Glycyl lysine isopeptide (Lys-Gly) (interchain with G-Cter in SUMO2) linkage. Lys-525 is subject to N6-acetyllysine. N6-acetyllysine; alternate is present on Lys-539. Lys-539 participates in a covalent cross-link: Glycyl lysine isopeptide (Lys-Gly) (interchain with G-Cter in SUMO2); alternate. Residue Lys-548 forms a Glycyl lysine isopeptide (Lys-Gly) (interchain with G-Cter in SUMO2) linkage. At Thr-556 the chain carries Phosphothreonine. Glycyl lysine isopeptide (Lys-Gly) (interchain with G-Cter in SUMO2) cross-links involve residues Lys-583 and Lys-600. The interval 585-600 (EDYKQRTQKKAEVEGK) is actin-binding. Lys-609 is subject to N6-acetyllysine; alternate. Lys-609 is covalently cross-linked (Glycyl lysine isopeptide (Lys-Gly) (interchain with G-Cter in SUMO2); alternate). Residues 624-651 (DEITYVELQKEEAQKLLEQYKEESKKAL) adopt a coiled-coil conformation. Glycyl lysine isopeptide (Lys-Gly) (interchain with G-Cter in SUMO2) cross-links involve residues Lys-638 and Lys-644. A compositionally biased stretch (basic and acidic residues) spans 645 to 657 (EESKKALPPEKKQ). A disordered region spans residues 645-727 (EESKKALPPE…GSGGIGYPYP (83 aa)). Arg-676 bears the Omega-N-methylarginine mark. Residues 684–702 (GGFNMRGGNFRGGAPGNRG) show a composition bias toward gly residues. Residues 688–713 (MRGGNFRGGAPGNRGGYNRRGNMPQR) are RNA-binding RGG-box. Asymmetric dimethylarginine occurs at positions 689, 694, and 701. An asymmetric dimethylarginine; alternate mark is found at Arg-707 and Arg-713. Omega-N-methylarginine; alternate occurs at positions 707 and 713. Over residues 713–723 (RGGGGGSGGIG) the composition is skewed to gly residues. Arg-728 and Arg-735 each carry asymmetric dimethylarginine. The tract at residues 743–772 (NYNRGGMPNRGNYNQNFRGRGNNRGYKNQS) is disordered. Position 787 is an N6-acetyllysine; alternate (Lys-787). Lys-787 participates in a covalent cross-link: Glycyl lysine isopeptide (Lys-Gly) (interchain with G-Cter in SUMO2); alternate.

In terms of assembly, oligomer (via ATPase domain and RNA-binding RGG-box region); oligomerization occurs upon ATP-binding in a chromatin-associated RNAs (caRNAs)- and transcription-dependent manner and is required for chromatin decompaction. ATP hydrolysis is required to cycle from an oligomeric to monomeric state to compact chromatin. Component of the coding region determinant (CRD)-mediated complex, composed of DHX9, HNRNPU, IGF2BP1, SYNCRIP and YBX1. Identified in the spliceosome C complex. Identified in a IGF2BP1-dependent mRNP granule complex containing untranslated mRNAs. Associates with heterogeneous nuclear ribonucleoprotein (hnRNP) particles. Associates (via middle region) with the C-terminal domain (CTD) RNA polymerase II (Pol II) holoenzyme; this association occurs in a RNA-independent manner. Associates (via middle region) with the core-TFIIH basal transcription factor complex; this association inhibits the CTD phosphorylation of RNA polymerase II holoenzyme by down-regulating TFIIH kinase activity. Associates with the telomerase holoenzyme complex. Associates with spindle microtubules (MTs) in a TPX2-dependent manner. Interacts (via C-terminus) with actin; this interaction is direct and mediates association with the phosphorylated CTD of RNA polymerase II and is disrupted in presence of the long non-coding H19 RNA. Interacts with AURKA. Interacts (via C-terminus) with CBX5; this interaction is, at least in part, RNA-dependent. Interacts with CR2. Interacts with CRY1. Interacts (via C-terminus) with EP300; this interaction enhances DNA-binding to nuclear scaffold/matrix attachment region (S/MAR) elements. Interacts with ERBB4. Interacts with GEMIN5. Interacts with IGF2BP1. Interacts with IGF2BP2 and IGF2BP3. Interacts with NCL; this interaction occurs during mitosis. Interacts (via C-terminus) with NR3C1 (via C-terminus). Interacts with PLK1; this interaction induces phosphorylation of HNRNPU at Ser-58 in mitosis. Interacts with POU3F4. Interacts with SMARCA4; this interaction occurs in embryonic stem cells and stimulates global Pol II-mediated transcription. Interacts (via C-terminus) with TOP2A; this interaction protects the topoisomerase TOP2A from degradation and positively regulates the relaxation of supercoiled DNA by TOP2A in a RNA-dependent manner. Interacts with TPX2; this interaction recruits HNRNPU to spindle microtubules (MTs). Interacts with UBQLN2. Interacts (via RNA-binding RGG-box region) with ZBTB7B; the interaction facilitates the recruitment of long non-coding RNA Blnc1 by ZBTB7B. Interacts with ERCC6. Cleaved at Asp-94 by CASP3 during T-cell apoptosis, resulting in a loss of DNA- and chromatin-binding activities. Post-translationally, extensively phosphorylated. Phosphorylated on Ser-58 by PLK1 and dephosphorylated by protein phosphatase 2A (PP2A) in mitosis. In terms of processing, arg-707 and Arg-713 are dimethylated, probably to asymmetric dimethylarginine. Citrullinated by PADI4.

The protein resides in the nucleus. It is found in the nucleus matrix. Its subcellular location is the chromosome. The protein localises to the nucleus speckle. It localises to the cytoplasm. The protein resides in the cytoskeleton. It is found in the microtubule organizing center. Its subcellular location is the centrosome. The protein localises to the centromere. It localises to the kinetochore. The protein resides in the spindle. It is found in the spindle pole. Its subcellular location is the midbody. The protein localises to the cell surface. It localises to the cytoplasmic granule. DNA- and RNA-binding protein involved in several cellular processes such as nuclear chromatin organization, telomere-length regulation, transcription, mRNA alternative splicing and stability, Xist-mediated transcriptional silencing and mitotic cell progression. Plays a role in the regulation of interphase large-scale gene-rich chromatin organization through chromatin-associated RNAs (caRNAs) in a transcription-dependent manner, and thereby maintains genomic stability. Required for the localization of the long non-coding Xist RNA on the inactive chromosome X (Xi) and the subsequent initiation and maintenance of X-linked transcriptional gene silencing during X-inactivation. Required for the topoisomerase TOP2A protein stability and activity in a RNA-dependent manner. Plays a role as a RNA polymerase II (Pol II) holoenzyme transcription regulator. Promotes transcription initiation by direct association with the core-TFIIH basal transcription factor complex for the assembly of a functional pre-initiation complex with Pol II in a actin-dependent manner. Blocks Pol II transcription elongation activity by inhibiting the C-terminal domain (CTD) phosphorylation of Pol II and dissociates from Pol II pre-initiation complex prior to productive transcription elongation. Positively regulates CBX5-induced transcriptional gene silencing and retention of CBX5 in the nucleus. Negatively regulates glucocorticoid-mediated transcriptional activation. Key regulator of transcription initiation and elongation in embryonic stem cells upon leukemia inhibitory factor (LIF) signaling. Involved in the long non-coding RNA H19-mediated Pol II transcriptional repression. Participates in the circadian regulation of the core clock component BMAL1 transcription. Plays a role in the regulation of telomere length. Plays a role as a global pre-mRNA alternative splicing modulator by regulating U2 small nuclear ribonucleoprotein (snRNP) biogenesis. Plays a role in mRNA stability. Component of the CRD-mediated complex that promotes MYC mRNA stabilization. Enhances the expression of specific genes, such as tumor necrosis factor TNFA, by regulating mRNA stability, possibly through binding to the 3'-untranslated region (UTR). Plays a role in mitotic cell cycle regulation. Involved in the formation of stable mitotic spindle microtubules (MTs) attachment to kinetochore, spindle organization and chromosome congression. Phosphorylation at Ser-58 by PLK1 is required for chromosome alignement and segregation and progression through mitosis. Also contributes to the targeting of AURKA to mitotic spindle MTs. Binds to double- and single-stranded DNA and RNA, poly(A), poly(C) and poly(G) oligoribonucleotides. Binds to chromatin-associated RNAs (caRNAs). Associates with chromatin to scaffold/matrix attachment region (S/MAR) elements in DNA. Associates with chromatin in a chromatin-associated RNAs (caRNAs)-dependent manner. Binds to the Xist RNA. Binds the long non-coding H19 RNA. Binds to SMN1/2 pre-mRNAs at G/U-rich regions. Binds to small nuclear RNAs (snRNAs). Binds to the 3'-UTR of TNFA mRNA. Binds (via RNA-binding RGG-box region) to the long non-coding Xist RNA; this binding is direct and bridges the Xist RNA and the inactive chromosome X (Xi). Also negatively regulates embryonic stem cell differentiation upon LIF signaling. Required for embryonic development. Binds to brown fat long non-coding RNA 1 (Blnc1); facilitates the recruitment of Blnc1 by ZBTB7B required to drive brown and beige fat development and thermogenesis. The sequence is that of Heterogeneous nuclear ribonucleoprotein U from Rattus norvegicus (Rat).